We begin with the raw amino-acid sequence, 40 residues long: Sapecin-C (40 aa).

Disulfide bonds link cysteine 3/cysteine 30, cysteine 16/cysteine 36, and cysteine 20/cysteine 38.

The protein belongs to the invertebrate defensin family. Type 1 subfamily. In terms of tissue distribution, hemocytes and fat body.

The protein localises to the secreted. Functionally, sapecins, which are potent bactericidal proteins, are produced in response to injury. Sapecin C is cytotoxic to Gram-positive bacteria. The polypeptide is Sapecin-C (Sarcophaga peregrina (Flesh fly)).